A 1199-amino-acid chain; its full sequence is Metabotropic glutamate receptor 1 (1199 aa).

The signal sequence occupies residues 1-18; that stretch reads MVRLLLIFFPMIFLEMSI. The Extracellular segment spans residues 19-592; it reads LPRMPDRKVL…VRYLEWSDIE (574 aa). Cysteines 67 and 109 form a disulfide. Tyr-74 contacts L-glutamate. Asn-98 is a glycosylation site (N-linked (GlcNAc...) asparagine). Residues Ser-165 and 186-188 contribute to the L-glutamate site; that span reads SAT. N-linked (GlcNAc...) asparagine glycosylation occurs at Asn-223. Tyr-236 is a binding site for L-glutamate. Cys-289 and Cys-291 are disulfide-bonded. Asp-318 is an L-glutamate binding site. A disulfide bond links Cys-378 and Cys-394. Asn-397 carries N-linked (GlcNAc...) asparagine glycosylation. Lys-409 is a binding site for L-glutamate. Cys-432 and Cys-439 are oxidised to a cystine. N-linked (GlcNAc...) asparagine glycosylation occurs at Asn-515. Residues 593–615 traverse the membrane as a helical segment; the sequence is SIIAIAFSCLGILVTLFVTLIFV. Topologically, residues 616 to 629 are cytoplasmic; the sequence is LYRDTPVVKSSSRE. A helical transmembrane segment spans residues 630-650; it reads LCYIILAGIFLGYVCPFTLIA. Over 651 to 658 the chain is Extracellular; that stretch reads KPTTTSCY. Cys-657 and Cys-746 are oxidised to a cystine. Residues 659–680 traverse the membrane as a helical segment; it reads LQRLLVGLSSAMCYSALVTKTN. Topologically, residues 681–703 are cytoplasmic; the sequence is RIARILAGSKKKICTRKPRFMSA. The chain crosses the membrane as a helical span at residues 704 to 727; that stretch reads WAQVIIASILISVQLTLVVTLIIM. The Extracellular portion of the chain corresponds to 728–750; sequence EPPMPILSYPSIKEVYLICNTSN. A helical transmembrane segment spans residues 751-772; sequence LGVVAPVGYNGLLIMSCTYYAF. Topologically, residues 773–785 are cytoplasmic; it reads KTRNVPANFNEAK. A helical membrane pass occupies residues 786-807; that stretch reads YIAFTMYTTCIIWLAFVPIYFG. Residues 808–815 lie on the Extracellular side of the membrane; it reads SNYKIITT. A helical membrane pass occupies residues 816 to 840; it reads CFAVSLSVTVALGCMFTPKMYIIIA. Topologically, residues 841–1199 are cytoplasmic; that stretch reads KPERNVRSAF…RDYKQSSSTL (359 aa). Residue Ser-853 is modified to Phosphoserine. Position 871 is a phosphothreonine (Thr-871). 3 disordered regions span residues 882–905, 959–1036, and 1056–1081; these read GAGNANSNGKSVSWSEPGGRQAPK, EEDN…QPKS, and HAVLAGPGTPGNSLRSLYPPPPPPQH. The span at 885–895 shows a compositional bias: polar residues; it reads NANSNGKSVSW. A phosphoserine mark is found at Ser-894 and Ser-969. Residues 1012–1033 are compositionally biased toward pro residues; it reads GLPPPLPQQQPQQPPPQQPPQQ. Phosphoserine is present on Ser-1098. The segment at 1120–1177 is disordered; that stretch reads EREGNTEEDELEEEEDLPTASKLTPEDSPALTPPSPFRDSVASGSSVPSSPVSESVLC. Acidic residues predominate over residues 1125-1136; sequence TEEDELEEEEDL. Ser-1147 carries the phosphoserine modification. Phosphothreonine is present on Thr-1151. Residue Ser-1154 is modified to Phosphoserine. Positions 1159-1175 are enriched in low complexity; sequence SVASGSSVPSSPVSESV.

It belongs to the G-protein coupled receptor 3 family. Homodimer; disulfide-linked. The PPXXF motif binds HOMER1, HOMER2 and HOMER3. Interacts with TAMALIN. Interacts with RYR1, RYR2, ITPR1, SHANK1 and SHANK3. Interacts with SIAH1. Predominantly expressed in cerebellar Purkinje cells, CA2-CA3 pyramidal cells of the hippocampus, and mitral and tufted cells of the olfactory bulb.

It localises to the cell membrane. It is found in the postsynaptic cell membrane. The protein resides in the cell projection. Its subcellular location is the dendrite. Functionally, G-protein coupled receptor for glutamate. Ligand binding causes a conformation change that triggers signaling via guanine nucleotide-binding proteins (G proteins) and modulates the activity of down-stream effectors. Signaling activates a phosphatidylinositol-calcium second messenger system. May participate in the central action of glutamate in the CNS, such as long-term potentiation in the hippocampus and long-term depression in the cerebellum. May function in the light response in the retina. Induces GRID1 and GRID2 cation-channel activation via GNAQ-PLC-PKC pathway in dopaminergic neurons and cerebellar Purkinje cell, respectively. This is Metabotropic glutamate receptor 1 (Grm1) from Rattus norvegicus (Rat).